The sequence spans 193 residues: 2',3'-cyclic-nucleotide 3'-phosphodiesterase (193 aa).

H40 functions as the Proton donor/acceptor in the catalytic mechanism. Substrate is bound at residue T42. H129 acts as the Proton donor/acceptor in catalysis. Substrate is bound by residues S131 and Y134.

Belongs to the 2H phosphoesterase superfamily. CPD1 family.

It is found in the golgi apparatus. It carries out the reaction a nucleoside 2',3'-cyclic phosphate + H2O = a nucleoside 2'-phosphate + H(+). Functionally, involved in the metabolism of ADP-ribose 1',2'-cyclic phosphate which is produced as a consequence of tRNA splicing. This chain is 2',3'-cyclic-nucleotide 3'-phosphodiesterase (CPD1), found in Phaeosphaeria nodorum (strain SN15 / ATCC MYA-4574 / FGSC 10173) (Glume blotch fungus).